A 374-amino-acid chain; its full sequence is Methionine import ATP-binding protein MetN 2 (374 aa).

Residues 1-22 (MSVATLQRKLPEAAPRRAGQTE) form a disordered region. An ABC transporter domain is found at 32–271 (VRFIGLGKTY…PQHEVSKTLL (240 aa)). 68–75 (GRSGAGKS) contacts ATP.

Belongs to the ABC transporter superfamily. Methionine importer (TC 3.A.1.24) family. The complex is composed of two ATP-binding proteins (MetN), two transmembrane proteins (MetI) and a solute-binding protein (MetQ).

Its subcellular location is the cell inner membrane. The catalysed reaction is L-methionine(out) + ATP + H2O = L-methionine(in) + ADP + phosphate + H(+). It catalyses the reaction D-methionine(out) + ATP + H2O = D-methionine(in) + ADP + phosphate + H(+). Its function is as follows. Part of the ABC transporter complex MetNIQ involved in methionine import. Responsible for energy coupling to the transport system. The chain is Methionine import ATP-binding protein MetN 2 from Pseudomonas fluorescens (strain ATCC BAA-477 / NRRL B-23932 / Pf-5).